Consider the following 176-residue polypeptide: Crossover junction endodeoxyribonuclease RuvC (176 aa).

Active-site residues include aspartate 7, glutamate 68, and aspartate 141. Aspartate 7, glutamate 68, and aspartate 141 together coordinate Mg(2+).

This sequence belongs to the RuvC family. Homodimer which binds Holliday junction (HJ) DNA. The HJ becomes 2-fold symmetrical on binding to RuvC with unstacked arms; it has a different conformation from HJ DNA in complex with RuvA. In the full resolvosome a probable DNA-RuvA(4)-RuvB(12)-RuvC(2) complex forms which resolves the HJ. Mg(2+) serves as cofactor.

The protein resides in the cytoplasm. The enzyme catalyses Endonucleolytic cleavage at a junction such as a reciprocal single-stranded crossover between two homologous DNA duplexes (Holliday junction).. Functionally, the RuvA-RuvB-RuvC complex processes Holliday junction (HJ) DNA during genetic recombination and DNA repair. Endonuclease that resolves HJ intermediates. Cleaves cruciform DNA by making single-stranded nicks across the HJ at symmetrical positions within the homologous arms, yielding a 5'-phosphate and a 3'-hydroxyl group; requires a central core of homology in the junction. The consensus cleavage sequence is 5'-(A/T)TT(C/G)-3'. Cleavage occurs on the 3'-side of the TT dinucleotide at the point of strand exchange. HJ branch migration catalyzed by RuvA-RuvB allows RuvC to scan DNA until it finds its consensus sequence, where it cleaves and resolves the cruciform DNA. This Streptomyces avermitilis (strain ATCC 31267 / DSM 46492 / JCM 5070 / NBRC 14893 / NCIMB 12804 / NRRL 8165 / MA-4680) protein is Crossover junction endodeoxyribonuclease RuvC.